We begin with the raw amino-acid sequence, 131 residues long: Profilin-4 (131 aa).

Cysteine 13 and cysteine 115 form a disulfide bridge. The short motif at 81 to 97 is the Involved in PIP2 interaction element; that stretch reads VVIRGKKGTGGITIKKT. Threonine 111 bears the Phosphothreonine mark.

The protein belongs to the profilin family. Occurs in many kinds of cells as a complex with monomeric actin in a 1:1 ratio. In terms of processing, phosphorylated by MAP kinases. In terms of tissue distribution, expressed predominantly in endosperm but is also found at low levels in all tissues examined, including mature and germinated pollen.

It localises to the cytoplasm. The protein localises to the cytoskeleton. In terms of biological role, binds to actin and affects the structure of the cytoskeleton. At high concentrations, profilin prevents the polymerization of actin, whereas it enhances it at low concentrations. By binding to PIP2, it inhibits the formation of IP3 and DG. Has a high affinity for poly-proline. The chain is Profilin-4 (PRO4) from Zea mays (Maize).